The sequence spans 202 residues: Small ribosomal subunit protein uS4 (202 aa).

Residues 90 to 152 (MRLDNTVFRL…ERSRRLVETN (63 aa)) form the S4 RNA-binding domain.

It belongs to the universal ribosomal protein uS4 family. In terms of assembly, part of the 30S ribosomal subunit. Contacts protein S5. The interaction surface between S4 and S5 is involved in control of translational fidelity.

Functionally, one of the primary rRNA binding proteins, it binds directly to 16S rRNA where it nucleates assembly of the body of the 30S subunit. With S5 and S12 plays an important role in translational accuracy. The protein is Small ribosomal subunit protein uS4 of Thermosynechococcus vestitus (strain NIES-2133 / IAM M-273 / BP-1).